Here is a 33-residue protein sequence, read N- to C-terminus: PRNPEIQNEIIDLHNYLRRSVNPXASNMLRSQW.

This sequence belongs to the CRISP family. Contains 8 disulfide bonds. As to expression, expressed by the venom gland.

It localises to the secreted. Blocks contraction of smooth muscle elicited by high potassium-induced depolarization, but does not block caffeine-stimulated contraction. May target voltage-gated calcium channels on smooth muscle. The chain is Cysteine-rich venom protein tripurin from Trimeresurus purpureomaculatus (Mangrove pit viper).